Consider the following 189-residue polypeptide: Inner membrane-spanning protein YciB (189 aa).

5 consecutive transmembrane segments (helical) span residues 4-24 (FFEFIPLIIFFVVFKTTDIYI), 53-73 (ITFGMVLVFGTLTIVLHDDVF), 76-96 (WKVTVVYALFSLALLVSQFFY), 121-141 (MAWALLFAVLSAVNVYVAFSL), and 149-169 (FKVFGLLAITLAFTLLSGLYI).

This sequence belongs to the YciB family.

It is found in the cell inner membrane. In terms of biological role, plays a role in cell envelope biogenesis, maintenance of cell envelope integrity and membrane homeostasis. In Psychromonas ingrahamii (strain DSM 17664 / CCUG 51855 / 37), this protein is Inner membrane-spanning protein YciB.